The primary structure comprises 858 residues: Magnesium transporter ALR2 (858 aa).

Residues 1–14 (MSSLSTSFDSSSDL) show a composition bias toward low complexity. Disordered regions lie at residues 1 to 81 (MSSL…NGGY), 318 to 337 (TYNH…TSGS), and 365 to 396 (NNES…EGND). Residues 1–741 (MSSLSTSFDS…NNKVTEMLGK (741 aa)) lie on the Cytoplasmic side of the membrane. A compositionally biased stretch (basic and acidic residues) spans 46-61 (PIRHEALALKVDETKD). Residues 67–81 (SSSNGENSGVENGGY) show a composition bias toward low complexity. Composition is skewed to basic and acidic residues over residues 367-379 (ESVR…DLHP) and 386-395 (NKIEGEKEGN). Residues 742–762 (VTMLGTMLVPLNVITGLFGMN) traverse the membrane as a helical segment. Over 763-771 (VKVPGRNGS) the chain is Extracellular. A helical transmembrane segment spans residues 772 to 792 (IAWWYGILGVLLLLAVISWFL). The Cytoplasmic portion of the chain corresponds to 793 to 858 (ASYWIKKIDP…SLPSRYSRYN (66 aa)).

This sequence belongs to the CorA metal ion transporter (MIT) (TC 1.A.35) family.

It is found in the cell membrane. In terms of biological role, plasma membrane magnesium transporter. The polypeptide is Magnesium transporter ALR2 (ALR2) (Saccharomyces cerevisiae (strain ATCC 204508 / S288c) (Baker's yeast)).